The primary structure comprises 712 residues: Aryl hydrocarbon receptor nuclear translocator 2 (712 aa).

Residues 36-73 (AGAMPARGGKRRSGMDFDDEDGEGPSKFSRENHSEIER) form a disordered region. Position 42 is an omega-N-methylarginine (Arg-42). Residues 63–73 (FSRENHSEIER) are compositionally biased toward basic and acidic residues. The 54-residue stretch at 63–116 (FSRENHSEIERRRRNKMTQYITELSDMVPTCSALARKPDKLTILRMAVSHMKSM) folds into the bHLH domain. PAS domains lie at 134–209 (TEQE…MTGR) and 323–393 (PVCM…VKLK). The PAC domain occupies 398-441 (SVMYRFRTKNREWLLIRTSSFTFQNPYSDEIEYVICTNTNVKQL). The disordered stretch occupies residues 573 to 712 (AWTGSRPPFP…DLGMFPPFSE (140 aa)). Composition is skewed to low complexity over residues 597–626 (SSHPYPADPSSYSPLSSPAASSPSGNAYPS) and 653–675 (SQWQSQHHGQQSGEQHSHQQPGQ).

In terms of assembly, efficient DNA binding requires dimerization with another bHLH protein. Heterodimer with NPAS4 or SIM1. Heterodimer with the aryl hydrocarbon receptor (AHR) or the SIM1 protein. Interacts with TACC3. In terms of tissue distribution, restricted to adult brain and kidney.

It localises to the nucleus. Its function is as follows. Transcription factor that plays a role in the development of the hypothalamo-pituitary axis, postnatal brain growth, and visual and renal function. Specifically recognizes the xenobiotic response element (XRE). This Mus musculus (Mouse) protein is Aryl hydrocarbon receptor nuclear translocator 2 (Arnt2).